The chain runs to 155 residues: Transcriptional repressor NrdR (155 aa).

The segment at 3-34 is a zinc-finger region; it reads CPFCHAEETKVVDSRLVADGAQVRRRRECLEC. Residues 49–139 form the ATP-cone domain; sequence PLIIKRDGRR…VYKRFKDVSD (91 aa).

The protein belongs to the NrdR family. Zn(2+) is required as a cofactor.

Negatively regulates transcription of bacterial ribonucleotide reductase nrd genes and operons by binding to NrdR-boxes. This Legionella pneumophila (strain Lens) protein is Transcriptional repressor NrdR.